Here is a 757-residue protein sequence, read N- to C-terminus: MSWSPSLPTQTCGAWEMKERLGTGGFGNVIRWHNQVTGEQIAIKQCRQELSPKNRDRWCLEIQIMRRLNHPNVVAARDVPEGMQNLAPNDLPLLAMEYCQGGDLRRYLNQFENCCGLREGAILTLLSDIASALRYLHENRIIHRDLKPENIVLQQGEKRLIHKIIDLGYAKELDQGSLCTSFVGTLQYLAPELLEQQKYTVTVDYWSFGTLAFECITGFRPFLPNWQPVQWHSKVRQKSEVDIVVSEDLNGTVKFSSSSPFPNNLNSVLAERLEKWLQLMLTWQPRQRGVDPQYGPNGCFRALDDILNLKLVHILNMVTGTIHTYPVMEDESLQSLKTRIREDTGILETDQELLQEAGLVLLPDKPATQCISDSKTNEGLTLDMDLVFLFDNSKMSYETQITPRPQPESVSCVLQEPKRNLSFFQMRKVWGQVWHSIQTLKEDCNRLQQGQRAAMMNLLRNNSCLSKMKNAMASTAQQLKAKLDFFKTSIQIDLEKYREQTEFGITSDKLLLAWREMEQAVEQCGRENDVKVLVERMMALQTDIVDLQRSPMGRKQGGTLDDLEEQARELYRRLREKPRDQRTEGDSQDMVRLLLQAIQSFEKKVRVIYSQLSKTVVCKQKALELLPKVEEVVRLMNEDEKTVVRLQEKRQKELWNLLKIACSKVRGPVSGSPDSMNVSRLSHPGHLMSQPSSACDSLPDSDKKSEELVAEAHALCSRLESALQDTVKQQDRSFTTLDWSWLQMEDEERCGLEQACD.

The region spanning 15-300 is the Protein kinase domain; that stretch reads WEMKERLGTG…DPQYGPNGCF (286 aa). ATP is bound by residues 21–29 and Lys-44; that span reads LGTGGFGNV. Catalysis depends on Asp-145, which acts as the Proton acceptor. Lys-163 participates in a covalent cross-link: Glycyl lysine isopeptide (Lys-Gly) (interchain with G-Cter in ubiquitin). At Ser-177 the chain carries Phosphoserine; by TBK1 and PKC/PRKCZ. Residue Cys-179 is modified to S-nitrosocysteine. Position 181 is a phosphoserine; by TBK1, PKC/PRKCZ and PDPK1 (Ser-181). Pro-191 bears the Hydroxyproline mark. The segment at 458–479 is leucine-zipper; the sequence is LLRNNSCLSKMKNAMASTAQQL. At Ser-670 the chain carries Phosphoserine; by autocatalysis. Ser-672 bears the Phosphoserine mark. A phosphoserine; by autocatalysis mark is found at Ser-675, Ser-682, Ser-689, Ser-692, Ser-697, Ser-705, Ser-733, and Ser-740. The disordered stretch occupies residues 682-703; sequence SHPGHLMSQPSSACDSLPDSDK. Residues 737–742 are NEMO-binding; the sequence is LDWSWL.

Belongs to the protein kinase superfamily. Ser/Thr protein kinase family. I-kappa-B kinase subfamily. Component of the I-kappa-B-kinase (IKK) core complex consisting of CHUK, IKBKB and IKBKG; probably four alpha/CHUK-beta/IKBKB dimers are associated with four gamma/IKBKG subunits. The IKK core complex seems to associate with regulatory or adapter proteins to form a IKK-signalosome holo-complex. The IKK complex associates with TERF2IP/RAP1, leading to promote IKK-mediated phosphorylation of RELA/p65. Part of a complex composed of NCOA2, NCOA3, CHUK/IKKA, IKBKB, IKBKG and CREBBP. Part of a 70-90 kDa complex at least consisting of CHUK/IKKA, IKBKB, NFKBIA, RELA, ELP1 and MAP3K14. Found in a membrane raft complex, at least composed of BCL10, CARD11, DPP4 and IKBKB. Interacts with SQSTM1 through PRKCZ or PRKCI. Forms an NGF-induced complex with IKBKB, PRKCI and TRAF6. May interact with MAVS/IPS1. Interacts with NALP2. Interacts with TICAM1. Interacts with FAF1; the interaction disrupts the IKK complex formation. Interacts with ATM. Part of a ternary complex consisting of TANK, IKBKB and IKBKG. Interacts with NIBP; the interaction is direct. Interacts with ARRB1 and ARRB2. Interacts with TRIM21. Interacts with NLRC5; prevents IKBKB phosphorylation and kinase activity. Interacts with PDPK1. Interacts with EIF2AK2/PKR. The phosphorylated form interacts with PPM1A and PPM1B. Interacts with ZNF268 isoform 2; the interaction is further increased in a TNF-alpha-dependent manner. Interacts with IKBKE. Interacts with ZC3H12A. Interacts with AKAP13. Interacts with LRRC14; disrupts IKBKB-IKBKG interaction preventing I-kappa-B-kinase (IKK) core complex formation and leading to a decrease of IKBKB phosphorylation and NF-kappaB activation. Interacts with SASH1. Interacts with ARFIP2. Interacts with FKBP5. Upon cytokine stimulation, phosphorylated on Ser-177 and Ser-181 by MEKK1 and/or MAP3K14/NIK as well as TBK1 and PRKCZ; which enhances activity. Phosphorylated by MAP3K7/TAK1 in response to NOD1 and NOD2 signaling, promoting activation and phosphorylation of NF-kappa-B inhibitors, leading to NF-kappa-B activation. Once activated, autophosphorylates on the C-terminal serine cluster; which decreases activity and prevents prolonged activation of the inflammatory response. Phosphorylated by the IKK-related kinases TBK1 and IKBKE, which is associated with reduced CHUK/IKKA and IKBKB activity and NF-kappa-B-dependent gene transcription. Dephosphorylated at Ser-177 and Ser-181 by PPM1A and PPM1B. Post-translationally, ubiquitinated. Monoubiquitination involves TRIM21 that leads to inhibition of Tax-induced NF-kappa-B signaling. 'Ser-163' may not serve as a monoubiquitination site. Ubiquitination on 'Ser-163' may modulate phosphorylation on C-terminal serine residues. In terms of processing, hydroxylated by PHD1/EGLN2, loss of hydroxylation under hypoxic conditions results in activation of NF-kappa-B.

Its subcellular location is the cytoplasm. The protein resides in the nucleus. The protein localises to the membrane raft. It carries out the reaction L-seryl-[I-kappa-B protein] + ATP = O-phospho-L-seryl-[I-kappa-B protein] + ADP + H(+). The catalysed reaction is L-seryl-[protein] + ATP = O-phospho-L-seryl-[protein] + ADP + H(+). The enzyme catalyses L-threonyl-[protein] + ATP = O-phospho-L-threonyl-[protein] + ADP + H(+). In terms of biological role, serine kinase that plays an essential role in the NF-kappa-B signaling pathway which is activated by multiple stimuli such as inflammatory cytokines, bacterial or viral products, DNA damages or other cellular stresses. Acts as a part of the canonical IKK complex in the conventional pathway of NF-kappa-B activation. Phosphorylates inhibitors of NF-kappa-B on 2 critical serine residues. These modifications allow polyubiquitination of the inhibitors and subsequent degradation by the proteasome. In turn, free NF-kappa-B is translocated into the nucleus and activates the transcription of hundreds of genes involved in immune response, growth control, or protection against apoptosis. In addition to the NF-kappa-B inhibitors, phosphorylates several other components of the signaling pathway including NEMO/IKBKG, NF-kappa-B subunits RELA and NFKB1, as well as IKK-related kinases TBK1 and IKBKE. IKK-related kinase phosphorylations may prevent the overproduction of inflammatory mediators since they exert a negative regulation on canonical IKKs. Phosphorylates FOXO3, mediating the TNF-dependent inactivation of this pro-apoptotic transcription factor. Also phosphorylates other substrates including NAA10, NCOA3, BCL10 and IRS1. Phosphorylates RIPK1 at 'Ser-25' which represses its kinase activity and consequently prevents TNF-mediated RIPK1-dependent cell death. Phosphorylates the C-terminus of IRF5, stimulating IRF5 homodimerization and translocation into the nucleus. In Rattus norvegicus (Rat), this protein is Inhibitor of nuclear factor kappa-B kinase subunit beta (Ikbkb).